Here is a 95-residue protein sequence, read N- to C-terminus: Co-chaperonin GroES (95 aa).

The protein belongs to the GroES chaperonin family. As to quaternary structure, heptamer of 7 subunits arranged in a ring. Interacts with the chaperonin GroEL.

Its subcellular location is the cytoplasm. Together with the chaperonin GroEL, plays an essential role in assisting protein folding. The GroEL-GroES system forms a nano-cage that allows encapsulation of the non-native substrate proteins and provides a physical environment optimized to promote and accelerate protein folding. GroES binds to the apical surface of the GroEL ring, thereby capping the opening of the GroEL channel. This is Co-chaperonin GroES from Pseudoalteromonas translucida (strain TAC 125).